Here is a 989-residue protein sequence, read N- to C-terminus: Bifunctional glutamine synthetase adenylyltransferase/adenylyl-removing enzyme (989 aa).

An adenylyl removase region spans residues 1–473 (MRGPLEPDSA…HYANLFEDVA (473 aa)). The segment at 479 to 989 (DADLMFPPDE…FERILETAAE (511 aa)) is adenylyl transferase.

Belongs to the GlnE family. Requires Mg(2+) as cofactor.

It catalyses the reaction [glutamine synthetase]-O(4)-(5'-adenylyl)-L-tyrosine + phosphate = [glutamine synthetase]-L-tyrosine + ADP. The enzyme catalyses [glutamine synthetase]-L-tyrosine + ATP = [glutamine synthetase]-O(4)-(5'-adenylyl)-L-tyrosine + diphosphate. In terms of biological role, involved in the regulation of glutamine synthetase GlnA, a key enzyme in the process to assimilate ammonia. When cellular nitrogen levels are high, the C-terminal adenylyl transferase (AT) inactivates GlnA by covalent transfer of an adenylyl group from ATP to specific tyrosine residue of GlnA, thus reducing its activity. Conversely, when nitrogen levels are low, the N-terminal adenylyl removase (AR) activates GlnA by removing the adenylyl group by phosphorolysis, increasing its activity. The regulatory region of GlnE binds the signal transduction protein PII (GlnB) which indicates the nitrogen status of the cell. This is Bifunctional glutamine synthetase adenylyltransferase/adenylyl-removing enzyme from Xanthobacter autotrophicus (strain ATCC BAA-1158 / Py2).